Reading from the N-terminus, the 78-residue chain is Protein DsvD (78 aa).

This sequence to A.fulgidus DsrD.

Functionally, may play an essential role in dissimilatory sulfite reduction. This chain is Protein DsvD (dsvD), found in Nitratidesulfovibrio vulgaris (strain ATCC 29579 / DSM 644 / CCUG 34227 / NCIMB 8303 / VKM B-1760 / Hildenborough) (Desulfovibrio vulgaris).